A 350-amino-acid polypeptide reads, in one-letter code: THUMP domain-containing protein 1 (350 aa).

A compositionally biased stretch (polar residues) spans 1 to 10 (MATTAQQSPQ). Disordered regions lie at residues 1–42 (MATT…LEPG) and 75–96 (PEKF…DDAE). The residue at position 2 (A2) is an N-acetylalanine. A phosphoserine mark is found at S8, S86, S88, and S119. The region spanning 147-254 (DMYKTKKKKT…KAVCCLSVVK (108 aa)) is the THUMP domain. Residue S270 is modified to Phosphoserine. A compositionally biased stretch (basic and acidic residues) spans 270 to 292 (SAKDSQPHPKLGNGKEAKLEPDS). A disordered region spans residues 270–350 (SAKDSQPHPK…VPKTNENELS (81 aa)).

The protein belongs to the THUMPD1 family. In terms of assembly, interacts with NAT10. Binds tRNA.

Functionally, functions as a tRNA-binding adapter to mediate NAT10-dependent tRNA acetylation modifying cytidine to N4-acetylcytidine (ac4C). This is THUMP domain-containing protein 1 (Thumpd1) from Mus musculus (Mouse).